Here is a 157-residue protein sequence, read N- to C-terminus: Glycine-rich RNA-binding protein (157 aa).

In terms of domain architecture, RRM spans 6 to 84 (YRCFVGGLAW…RNITVNEAQS (79 aa)). Residues 70–157 (QELDGRNITV…YGGGGGGSRW (88 aa)) form a disordered region. Composition is skewed to gly residues over residues 86–138 (GSGG…GGYG) and 145–157 (DGGY…GSRW).

May play a role in the biosynthesis and processing of heterogeneous nuclear RNA and in the maturation of specific mRNAs in response to wounding. This is Glycine-rich RNA-binding protein from Daucus carota (Wild carrot).